Consider the following 442-residue polypeptide: UDP-N-acetylmuramoylalanine--D-glutamate ligase (442 aa).

109–115 (GSNGKTT) contributes to the ATP binding site.

This sequence belongs to the MurCDEF family.

The protein localises to the cytoplasm. It carries out the reaction UDP-N-acetyl-alpha-D-muramoyl-L-alanine + D-glutamate + ATP = UDP-N-acetyl-alpha-D-muramoyl-L-alanyl-D-glutamate + ADP + phosphate + H(+). Its pathway is cell wall biogenesis; peptidoglycan biosynthesis. Functionally, cell wall formation. Catalyzes the addition of glutamate to the nucleotide precursor UDP-N-acetylmuramoyl-L-alanine (UMA). This Solibacter usitatus (strain Ellin6076) protein is UDP-N-acetylmuramoylalanine--D-glutamate ligase.